The primary structure comprises 691 residues: DNA ligase (691 aa).

NAD(+)-binding positions include 41 to 45 (DAEYD), 90 to 91 (SL), and Glu130. Residue Lys132 is the N6-AMP-lysine intermediate of the active site. NAD(+) contacts are provided by Arg153, Glu190, Lys307, and Lys331. Cys425, Cys428, Cys443, and Cys449 together coordinate Zn(2+). The BRCT domain maps to 610 to 691 (APQGVLAGKT…LHQLLEGNTP (82 aa)).

The protein belongs to the NAD-dependent DNA ligase family. LigA subfamily. Mg(2+) serves as cofactor. Mn(2+) is required as a cofactor.

It catalyses the reaction NAD(+) + (deoxyribonucleotide)n-3'-hydroxyl + 5'-phospho-(deoxyribonucleotide)m = (deoxyribonucleotide)n+m + AMP + beta-nicotinamide D-nucleotide.. DNA ligase that catalyzes the formation of phosphodiester linkages between 5'-phosphoryl and 3'-hydroxyl groups in double-stranded DNA using NAD as a coenzyme and as the energy source for the reaction. It is essential for DNA replication and repair of damaged DNA. This chain is DNA ligase, found in Burkholderia cenocepacia (strain ATCC BAA-245 / DSM 16553 / LMG 16656 / NCTC 13227 / J2315 / CF5610) (Burkholderia cepacia (strain J2315)).